The primary structure comprises 367 residues: Phosphoribosylaminoimidazole-succinocarboxamide synthase (367 aa).

Belongs to the SAICAR synthetase family.

It catalyses the reaction 5-amino-1-(5-phospho-D-ribosyl)imidazole-4-carboxylate + L-aspartate + ATP = (2S)-2-[5-amino-1-(5-phospho-beta-D-ribosyl)imidazole-4-carboxamido]succinate + ADP + phosphate + 2 H(+). It functions in the pathway purine metabolism; IMP biosynthesis via de novo pathway; 5-amino-1-(5-phospho-D-ribosyl)imidazole-4-carboxamide from 5-amino-1-(5-phospho-D-ribosyl)imidazole-4-carboxylate: step 1/2. The protein is Phosphoribosylaminoimidazole-succinocarboxamide synthase of Psychromonas ingrahamii (strain DSM 17664 / CCUG 51855 / 37).